A 508-amino-acid chain; its full sequence is O-acetyltransferase pigM (508 aa).

Positions 166 to 188 (TPAPDERGKISPSLEDAAGSPRT) are disordered.

Its pathway is secondary metabolite biosynthesis. In terms of biological role, O-acetyltransferase; part of the gene cluster that mediates the biosynthesis of azaphilone pigments (MonAzPs), a complex mixture of compounds with a common azaphilone skeleton very widely used as food colorants. PigM and pigO are involved in the elimination of the omega-1 alcohol with pigM acting as an O-acetyltransferase that synthesizes the O-11 acetyl intermediate whereas pigO eliminates acetic acid to yield an intermediate with a C10(11) double bond. The first step of the pathway is performed by the nrPKS pigA that forms the hexaketide precursor from successive condensations of five malonyl-CoA units, with a simple acetyl-CoA starter unit. The role of esterase pigG is not clear, but it may play at most a supplementary role in the formation of the benzaldehyde produced by the pigA nrPKS. This very reactive benzaldehyde is intercepted by the pigC ketoreductase that to provide the first stable enzyme-free MonAzPs intermediate, 6-(4-hydroxy-2-oxopentyl)-3-methyl-2,4-dioxocyclohexane carbaldehyde, also known as M7PKS-1. The FAD-dependent monooxygenase pigN hydroxylates M7PKS-1 at C-4, which triggers the formation of the pyran ring. PigJ, pigK and pigD are involved in the acetylation of the pyran ring. PigJ and pigK form the two subunits of a dedicated fungal FAS that produces the side chain fatty acyl moiety of MonAzPs and pigD transfers the fatty acyl chain to the C-4 alcohol. PigM and pigO are involved in the elimination of the omega-1 alcohol. PigM acts as an O-acetyltransferase that synthesizes the putative O-11 acetyl intermediate whereas pigO eliminates acetic acid to yield an intermediate with a C10(11) double bond. The dehydration of the C-11 alcohol followed by the reduction of the C6(7) double bond by the NAD(P)H-dependent oxidoreductase pigE increases the electrophilicity of the C-5 ketone of the resulting acyl benzopyran. This in turn sets up the C-5 ketone for an intramolecular Knoevenagel aldol condensation with the C-20 enol of the side chain. This condensation affords the characteristic linear tricyclic carbon skeletons of the yellow pigments that serve as the common precursors for the classical yellow pigments monascin and ankaflavin, orange pigments rubopunctatin and monascorubrin, and red pigments ribropunctamine and monascorubramine. The FAD-dependent oxidoreductase pigF is especially invoved in the biosynthesis of orange and red pigments via desaturation of C6(7). This chain is O-acetyltransferase pigM, found in Monascus ruber (Mold).